The following is a 116-amino-acid chain: Iron-sulfur cluster insertion protein ErpA (116 aa).

Iron-sulfur cluster-binding residues include Cys44, Cys108, and Cys110.

It belongs to the HesB/IscA family. Homodimer. It depends on iron-sulfur cluster as a cofactor.

Required for insertion of 4Fe-4S clusters for at least IspG. This Shewanella denitrificans (strain OS217 / ATCC BAA-1090 / DSM 15013) protein is Iron-sulfur cluster insertion protein ErpA.